We begin with the raw amino-acid sequence, 289 residues long: Cuticle collagen 19 (289 aa).

The N-terminal stretch at 1–18 (MGKLIVVGSCGVLVCVLA) is a signal peptide. Residues 95–289 (SEGCPAGPPG…PCPSRAAYKA (195 aa)) form a disordered region. Triple-helical region regions lie at residues 101 to 130 (GPPGPPGEGGQKGNPGHDGDDGKPGAPGVI) and 147 to 269 (GRPG…KGED). Over residues 162–183 (GPAGGNGRRGPPGPVGGPGEQG) the composition is skewed to gly residues. Low complexity-rich tracts occupy residues 184–207 (PQGDAGRPGAAGRPGPAGPRGEPG) and 223–239 (PRGETGPAGNPGAPGND).

The protein belongs to the cuticular collagen family. In terms of assembly, collagen polypeptide chains are complexed within the cuticle by disulfide bonds and other types of covalent cross-links.

Its function is as follows. Nematode cuticles are composed largely of collagen-like proteins. The cuticle functions both as an exoskeleton and as a barrier to protect the worm from its environment. The protein is Cuticle collagen 19 (col-19) of Caenorhabditis elegans.